The primary structure comprises 353 residues: Phosphoribosylformylglycinamidine cyclo-ligase (353 aa).

The protein belongs to the AIR synthase family.

It localises to the cytoplasm. The catalysed reaction is 2-formamido-N(1)-(5-O-phospho-beta-D-ribosyl)acetamidine + ATP = 5-amino-1-(5-phospho-beta-D-ribosyl)imidazole + ADP + phosphate + H(+). Its pathway is purine metabolism; IMP biosynthesis via de novo pathway; 5-amino-1-(5-phospho-D-ribosyl)imidazole from N(2)-formyl-N(1)-(5-phospho-D-ribosyl)glycinamide: step 2/2. This chain is Phosphoribosylformylglycinamidine cyclo-ligase, found in Methylocella silvestris (strain DSM 15510 / CIP 108128 / LMG 27833 / NCIMB 13906 / BL2).